Reading from the N-terminus, the 466-residue chain is Gamma-aminobutyric acid permease (466 aa).

Topologically, residues 2 to 20 (GQSSQPHELGGGLKSRHVT) are cytoplasmic. 2 consecutive transmembrane segments (helical) span residues 21–41 (MLSI…VAIA) and 42–62 (EAGP…VMIM). Residues 63–96 (RMLAEMAVATPDTGSFSTYADKAIGRWAGYTIGW) are Cytoplasmic-facing. A helical transmembrane segment spans residues 97–117 (LYWWFWVLVIPLEANIAAMIL). Residue histidine 118 is a topological domain, periplasmic. Residues 119–139 (SWVPGIPIWLFSLVITLALTG) traverse the membrane as a helical segment. Over 140-153 (SNLLSVKNYGEFEF) the chain is Cytoplasmic. The chain crosses the membrane as a helical span at residues 154–174 (WLALCKVIAILAFIFLGAVAI). Residues 175 to 199 (SGFYPYAEVSGISRLWDSGGFMPNG) are Periplasmic-facing. Residues 200 to 220 (FGAVLSAMLITMFSFMGAEIV) form a helical membrane-spanning segment. Over 221–246 (TIAAAESDTPEKHIVRATNSVIWRIS) the chain is Cytoplasmic. The chain crosses the membrane as a helical span at residues 247 to 267 (IFYLCSIFVVVALIPWNMPGL). Residues 268 to 286 (KAVGSYRSVLELLNIPHAK) lie on the Periplasmic side of the membrane. A helical transmembrane segment spans residues 287–307 (LIMDCVILLSVTSCLNSALYT). The Cytoplasmic portion of the chain corresponds to 308–334 (ASRMLYSLSRRGDAPAVMGKINRSKTP). A helical transmembrane segment spans residues 335–355 (YVAVLLSTGAAFLTVVVNYYA). The Periplasmic portion of the chain corresponds to 356–358 (PAK). The chain crosses the membrane as a helical span at residues 359-379 (VFKFLIDSSGAIALLVYLVIA). The Cytoplasmic portion of the chain corresponds to 380-402 (VSQLRMRKILRAEGSEIRLRMWL). Residues 403–423 (YPWLTWLVIGFITFVLVVMLF) traverse the membrane as a helical segment. At 424 to 428 (RPAQQ) the chain is on the periplasmic side. The chain crosses the membrane as a helical span at residues 429 to 449 (LEVISTGLLAIGIICTVPIMA). Topologically, residues 450 to 466 (RWKKLVLWQKTPVHNTR) are cytoplasmic.

This sequence belongs to the amino acid-polyamine-organocation (APC) superfamily. Amino acid transporter (AAT) (TC 2.A.3.1) family. Monomer.

It localises to the cell inner membrane. It carries out the reaction 4-aminobutanoate(in) + H(+)(in) = 4-aminobutanoate(out) + H(+)(out). The protein operates within amino-acid degradation; 4-aminobutanoate degradation. With respect to regulation, uptake is stimulated by ammonium sulfate and abolished by 2,4-dinitrophenol. Is affected both topologically and kinetically by phospholipid composition of the membrane. In cells lacking phosphatidylethanolamine (PE), the N-terminal hairpin is inverted relative to the membrane and the rate of GABA transport is reduced by more than 99%. In terms of biological role, transporter for gamma-aminobutyrate (GABA). Transport is driven by the membrane potential. Can also transport a number of GABA analogs such as nipecotic acid or muscimol. The sequence is that of Gamma-aminobutyric acid permease from Escherichia coli (strain K12).